A 676-amino-acid chain; its full sequence is Envelope glycoprotein (676 aa).

Positions 1-32 are cleaved as a signal peptide; it reads MGVTGILQLPRDRFKRTSFFLWVIILFQRTFS. Residues 33–650 are Extracellular-facing; the sequence is IPLGVIHNST…NDNWWTGWRQ (618 aa). N-linked (GlcNAc...) asparagine; by host glycosylation occurs at Asn40. 5 disulfides stabilise this stretch: Cys53-Cys609, Cys108-Cys135, Cys121-Cys147, Cys511-Cys556, and Cys601-Cys608. A receptor-binding region spans residues 54 to 201; the sequence is RDKLSSTNQL…DFFSSHPLRE (148 aa). Asn204, Asn228, Asn238, Asn257, Asn268, Asn296, Asn317, Asn333, Asn346, Asn386, and Asn413 each carry an N-linked (GlcNAc...) asparagine; by host glycan. Residues 305-485 form a mucin-like region region; the sequence is ELSFTVVSNG…SGKLGLITNT (181 aa). Over residues 315–335 the composition is skewed to polar residues; the sequence is AKNISGQSPARTSSDPGTNTT. A disordered region spans residues 315 to 337; that stretch reads AKNISGQSPARTSSDPGTNTTTE. Positions 373 to 391 are enriched in polar residues; that stretch reads TSPQSLTTKPGPDNSTHNT. Disordered regions lie at residues 373 to 392 and 402 to 479; these read TSPQ…HNTP and TQVE…SGKL. Low complexity predominate over residues 414–432; the sequence is DSTASDTPSATTAAGPPKA. A compositionally biased stretch (polar residues) spans 433–464; the sequence is ENTNTSKSTDFLDPATTTSPQNHSETAGNNNT. 3 N-linked (GlcNAc...) asparagine; by host glycosylation sites follow: Asn436, Asn454, and Asn462. The fusion peptide stretch occupies residues 524 to 539; that stretch reads GAAIGLAWIPYFGPAA. The stretch at 554–595 forms a coiled coil; sequence LICGLRQLANETTQALQLFLRATTELRTFSILNRKAIDFLLQ. An N-linked (GlcNAc...) asparagine; by host glycan is attached at Asn563. Residues 615–634 adopt a coiled-coil conformation; it reads WTKNITDKIDQIIHDFVDKT. Asn618 is a glycosylation site (N-linked (GlcNAc...) asparagine; by host). Residues 651–671 traverse the membrane as a helical segment; sequence WIPAGIGVTGVIIAVIALFCI. Residues Cys670 and Cys672 are each lipidated (S-palmitoyl cysteine; by host). At 672–676 the chain is on the cytoplasmic side; the sequence is CKFVF.

The protein belongs to the filoviruses glycoprotein family. In terms of assembly, homotrimer; each monomer consists of a GP1 and a GP2 subunit linked by disulfide bonds. The resulting peplomers (GP1,2) protrude from the virus surface as spikes. Interacts with host integrin alpha-V/ITGAV. Interacts with host CLEC10A. Binds also to host CD209 and CLEC4M/DC-SIGN(R). Interacts with host FOLR1. Interacts with BST2; this interaction inhibits the antiviral effect of BST2 and this allows viral release from infected cells. Interacts with host FCN1; this interaction enhances viral entry. Interacts with host TLR4; this interaction induces cell death in T-lymphocytes or proinflammatory cytokines and SOCS1 production in monocytes. As to quaternary structure, interacts with host entry receptor NPC1. GP1 and GP2delta are part of GP1,2delta soluble complexes released by ectodomain shedding. Post-translationally, the signal peptide region modulates GP's high mannose glycosylation, thereby determining the efficiency of the interactions with DC-SIGN(R). In terms of processing, N-glycosylated. O-glycosylated in the mucin-like region. Post-translationally, palmitoylation of GP2 is not required for its function. In terms of processing, specific enzymatic cleavages in vivo yield mature proteins. The precursor is processed into GP1 and GP2 by host cell furin in the trans Golgi, and maybe by other host proteases, to yield the mature GP1 and GP2 proteins. The cleavage site corresponds to the furin optimal cleavage sequence [KR]-X-[KR]-R. This cleavage does not seem to be required for function. After the internalization of the virus into cell endosomes, GP1 C-terminus is removed by the endosomal proteases cathepsin B, cathepsin L, or both, leaving a 19-kDa N-terminal fragment which is further digested by cathepsin B. Proteolytic processing of GP1,2 by host ADAM17 can remove the transmembrane anchor of GP2 and leads to shedding of complexes consisting in GP1 and truncated GP2 (GP1,2delta).

Its subcellular location is the virion membrane. It is found in the host cell membrane. The protein resides in the secreted. Its function is as follows. Trimeric GP1,2 complexes form the virion surface spikes and mediate the viral entry processes, with GP1 acting as the receptor-binding subunit and GP2 as the membrane fusion subunit. At later times of infection, down-regulates the expression of various host cell surface molecules that are essential for immune surveillance and cell adhesion. Down-modulates several integrins including ITGA1, ITGA2, ITGA3, ITGA4, ITGA5, ITGA6, ITGAV and ITGB1. This decrease in cell adhesion molecules may lead to cell detachment, contributing to the disruption of blood vessel integrity and hemorrhages developed during infection (cytotoxicity). Interacts with host TLR4 and thereby stimulates the differentiation and activation of monocytes leading to bystander death of T-lymphocytes. Down-regulates as well the function of host natural killer cells. Counteracts the antiviral effect of host BST2/tetherin that restricts release of progeny virions from infected cells. However, cooperates with VP40 and host BST2 to activate canonical NF-kappa-B pathway in a manner dependent on neddylation. Functions as a decoy for anti-GP1,2 antibodies thereby contributing to viral immune evasion. Interacts and activates host macrophages and dendritic cells inducing up-regulation of cytokine transcription. This effect is mediated throught activation of host TLR4. Functionally, responsible for binding to the receptor(s) on target cells. Interacts with CD209/DC-SIGN and CLEC4M/DC-SIGNR which act as cofactors for virus entry into dendritic cells (DCs) and endothelial cells. Binding to the macrophage specific lectin CLEC10A also seems to enhance virus infectivity. Interaction with FOLR1/folate receptor alpha may be a cofactor for virus entry in some cell types, although results are contradictory. Members of the Tyro3 receptor tyrosine kinase family also seem to be cell entry factors in filovirus infection. Once attached, the virions are internalized through clathrin-dependent endocytosis and/or macropinocytosis. After internalization of the virus into the endosomes of the host cell, proteolysis of GP1 by two cysteine proteases, CTSB/cathepsin B and CTSL/cathepsin L removes the glycan cap and allows GP1 binding to the host entry receptor NPC1. NPC1-binding, Ca(2+) and acidic pH induce a conformational change of GP2, which unmasks its fusion peptide and permit membranes fusion. In terms of biological role, acts as a class I viral fusion protein. Under the current model, the protein has at least 3 conformational states: pre-fusion native state, pre-hairpin intermediate state, and post-fusion hairpin state. During viral and target cell membrane fusion, the coiled coil regions (heptad repeats) assume a trimer-of-hairpins structure, positioning the fusion peptide in close proximity to the C-terminal region of the ectodomain. The formation of this structure appears to drive apposition and subsequent fusion of viral and target cell membranes. Responsible for penetration of the virus into the cell cytoplasm by mediating the fusion of the membrane of the endocytosed virus particle with the endosomal membrane. Low pH in endosomes induces an irreversible conformational change in GP2, releasing the fusion hydrophobic peptide. The chain is Envelope glycoprotein (GP) from Epomops franqueti (Franquet's epauletted fruit bat).